Here is a 179-residue protein sequence, read N- to C-terminus: Large ribosomal subunit protein uL5 (179 aa).

The protein belongs to the universal ribosomal protein uL5 family. Part of the 50S ribosomal subunit; part of the 5S rRNA/L5/L18/L25 subcomplex. Contacts the 5S rRNA and the P site tRNA. Forms a bridge to the 30S subunit in the 70S ribosome.

In terms of biological role, this is one of the proteins that bind and probably mediate the attachment of the 5S RNA into the large ribosomal subunit, where it forms part of the central protuberance. In the 70S ribosome it contacts protein S13 of the 30S subunit (bridge B1b), connecting the 2 subunits; this bridge is implicated in subunit movement. Contacts the P site tRNA; the 5S rRNA and some of its associated proteins might help stabilize positioning of ribosome-bound tRNAs. This Tolumonas auensis (strain DSM 9187 / NBRC 110442 / TA 4) protein is Large ribosomal subunit protein uL5.